Here is an 81-residue protein sequence, read N- to C-terminus: Photosystem I iron-sulfur center (81 aa).

2 4Fe-4S ferredoxin-type domains span residues 2–31 (SHSVKIYDTCIGCTQCVRACPTDVLEMIPW) and 39–68 (IASAPRTEDCVGCKRCESACPTDFLSVRVY). [4Fe-4S] cluster contacts are provided by C11, C14, C17, C21, C48, C51, C54, and C58.

In terms of assembly, the eukaryotic PSI reaction center is composed of at least 11 subunits. The cofactor is [4Fe-4S] cluster.

The protein localises to the plastid. It is found in the chloroplast thylakoid membrane. The catalysed reaction is reduced [plastocyanin] + hnu + oxidized [2Fe-2S]-[ferredoxin] = oxidized [plastocyanin] + reduced [2Fe-2S]-[ferredoxin]. Apoprotein for the two 4Fe-4S centers FA and FB of photosystem I (PSI); essential for photochemical activity. FB is the terminal electron acceptor of PSI, donating electrons to ferredoxin. The C-terminus interacts with PsaA/B/D and helps assemble the protein into the PSI complex. Required for binding of PsaD and PsaE to PSI. PSI is a plastocyanin-ferredoxin oxidoreductase, converting photonic excitation into a charge separation, which transfers an electron from the donor P700 chlorophyll pair to the spectroscopically characterized acceptors A0, A1, FX, FA and FB in turn. This is Photosystem I iron-sulfur center from Spinacia oleracea (Spinach).